A 697-amino-acid chain; its full sequence is Glycine--tRNA ligase beta subunit (697 aa).

This sequence belongs to the class-II aminoacyl-tRNA synthetase family. In terms of assembly, tetramer of two alpha and two beta subunits.

It is found in the cytoplasm. The enzyme catalyses tRNA(Gly) + glycine + ATP = glycyl-tRNA(Gly) + AMP + diphosphate. In Solidesulfovibrio magneticus (strain ATCC 700980 / DSM 13731 / RS-1) (Desulfovibrio magneticus), this protein is Glycine--tRNA ligase beta subunit.